The chain runs to 606 residues: Glutamine--fructose-6-phosphate aminotransferase [isomerizing] (606 aa).

The active-site Nucleophile; for GATase activity is C2. The Glutamine amidotransferase type-2 domain occupies 2–218; sequence CGIFGYLGQR…SGELAVLRIG (217 aa). 2 consecutive SIS domains span residues 278–424 and 455–596; these read FAES…QRQE and WRCR…VDRP. Catalysis depends on K601, which acts as the For Fru-6P isomerization activity.

In terms of assembly, homodimer.

The protein resides in the cytoplasm. It catalyses the reaction D-fructose 6-phosphate + L-glutamine = D-glucosamine 6-phosphate + L-glutamate. Its function is as follows. Catalyzes the first step in hexosamine metabolism, converting fructose-6P into glucosamine-6P using glutamine as a nitrogen source. This is Glutamine--fructose-6-phosphate aminotransferase [isomerizing] from Chlamydia muridarum (strain MoPn / Nigg).